Here is a 172-residue protein sequence, read N- to C-terminus: Protein-export protein SecB (172 aa).

It belongs to the SecB family. In terms of assembly, homotetramer, a dimer of dimers. One homotetramer interacts with 1 SecA dimer.

It is found in the cytoplasm. Its function is as follows. One of the proteins required for the normal export of preproteins out of the cell cytoplasm. It is a molecular chaperone that binds to a subset of precursor proteins, maintaining them in a translocation-competent state. It also specifically binds to its receptor SecA. The polypeptide is Protein-export protein SecB (Xylella fastidiosa (strain Temecula1 / ATCC 700964)).